The sequence spans 600 residues: Kelch-like protein 24 (600 aa).

Residues 66–133 (TDVIICVEGK…VYTGKVKITT (68 aa)) form the BTB domain. Positions 168 to 270 (CLGIQRFADT…HPNYFVQTVE (103 aa)) constitute a BACK domain. 6 Kelch repeats span residues 314-363 (VIVV…ALRN), 365-407 (ILVS…VLLG), 408-454 (KVYV…SCVG), 456-502 (LFVI…SLNN), 504-544 (IYVA…VCNG), and 546-592 (IYIL…TIHR).

As to quaternary structure, forms homodimers. Interacts with GRIK2. Component of the BCR(KLHL24) E3 ubiquitin ligase complex, composed of CUL3, RBX1 and KLHL24. Interacts with CUL3. Interacts with KRT14. In terms of processing, autoubiquitinated. Autoubiquitination leads to proteasomal degradation and is necessary to control KLHL24 levels. As to expression, expressed in the skin. Found in keratinocytes, dermal fibroblasts, and melanocytes. Basal-layer keratinocytes have lower KLHL24 expression than suprabasal keratinocytes. Expressed in the brain, spinal cord, liver, testis, heart and at higher levels in the skeletal muscle.

It is found in the perikaryon. The protein resides in the cell projection. Its subcellular location is the axon. It localises to the cytoplasm. The protein localises to the cell junction. It is found in the desmosome. The protein resides in the adherens junction. Its function is as follows. Necessary to maintain the balance between intermediate filament stability and degradation, a process that is essential for skin integrity. As part of the BCR(KLHL24) E3 ubiquitin ligase complex, mediates ubiquitination of KRT14 and controls its levels during keratinocytes differentiation. Specifically reduces kainate receptor-mediated currents in hippocampal neurons, most probably by modulating channel properties. Has a crucial role in cardiac development and function. The protein is Kelch-like protein 24 (KLHL24) of Homo sapiens (Human).